The primary structure comprises 79 residues: Acyl carrier protein (79 aa).

The 76-residue stretch at 2–77 folds into the Carrier domain; sequence SDIEQRVKKI…QAIDYAKAHV (76 aa). At Ser-37 the chain carries O-(pantetheine 4'-phosphoryl)serine.

This sequence belongs to the acyl carrier protein (ACP) family. 4'-phosphopantetheine is transferred from CoA to a specific serine of apo-ACP by AcpS. This modification is essential for activity because fatty acids are bound in thioester linkage to the sulfhydryl of the prosthetic group.

The protein resides in the cytoplasm. It functions in the pathway lipid metabolism; fatty acid biosynthesis. In terms of biological role, carrier of the growing fatty acid chain in fatty acid biosynthesis. The polypeptide is Acyl carrier protein (Janthinobacterium sp. (strain Marseille) (Minibacterium massiliensis)).